Consider the following 153-residue polypeptide: Ribonuclease 2 (153 aa).

The protein belongs to the BetVI family.

It localises to the cytoplasm. Catalyzes the two-stage endonucleolytic cleavage to 3'-phosphomononucleotides and 3'-phosphooligonucleotides with 2',3'-cyclic phosphate intermediates. This chain is Ribonuclease 2, found in Panax ginseng (Korean ginseng).